The sequence spans 189 residues: Cytidylate kinase (189 aa).

7–15 (GPPGSGKTS) is an ATP binding site.

This sequence belongs to the cytidylate kinase family. Type 2 subfamily.

It localises to the cytoplasm. It carries out the reaction CMP + ATP = CDP + ADP. It catalyses the reaction dCMP + ATP = dCDP + ADP. This chain is Cytidylate kinase, found in Saccharolobus islandicus (strain L.S.2.15 / Lassen #1) (Sulfolobus islandicus).